The chain runs to 116 residues: Phosphoribosyl-AMP cyclohydrolase (116 aa).

Residue D85 coordinates Mg(2+). Zn(2+) is bound at residue C86. D87 and D89 together coordinate Mg(2+). Residues C102 and C109 each coordinate Zn(2+).

This sequence belongs to the PRA-CH family. In terms of assembly, homodimer. The cofactor is Mg(2+). It depends on Zn(2+) as a cofactor.

The protein resides in the cytoplasm. The enzyme catalyses 1-(5-phospho-beta-D-ribosyl)-5'-AMP + H2O = 1-(5-phospho-beta-D-ribosyl)-5-[(5-phospho-beta-D-ribosylamino)methylideneamino]imidazole-4-carboxamide. It participates in amino-acid biosynthesis; L-histidine biosynthesis; L-histidine from 5-phospho-alpha-D-ribose 1-diphosphate: step 3/9. Catalyzes the hydrolysis of the adenine ring of phosphoribosyl-AMP. The polypeptide is Phosphoribosyl-AMP cyclohydrolase (Corynebacterium diphtheriae (strain ATCC 700971 / NCTC 13129 / Biotype gravis)).